A 201-amino-acid chain; its full sequence is Peptidyl-tRNA hydrolase (201 aa).

Tyrosine 15 lines the tRNA pocket. The active-site Proton acceptor is histidine 20. TRNA-binding residues include tyrosine 66, asparagine 68, and asparagine 114.

It belongs to the PTH family. Monomer.

The protein resides in the cytoplasm. It carries out the reaction an N-acyl-L-alpha-aminoacyl-tRNA + H2O = an N-acyl-L-amino acid + a tRNA + H(+). Hydrolyzes ribosome-free peptidyl-tRNAs (with 1 or more amino acids incorporated), which drop off the ribosome during protein synthesis, or as a result of ribosome stalling. Functionally, catalyzes the release of premature peptidyl moieties from peptidyl-tRNA molecules trapped in stalled 50S ribosomal subunits, and thus maintains levels of free tRNAs and 50S ribosomes. The polypeptide is Peptidyl-tRNA hydrolase (Burkholderia pseudomallei (strain K96243)).